A 428-amino-acid polypeptide reads, in one-letter code: Glutamate-1-semialdehyde 2,1-aminomutase 1 (428 aa).

Lys268 carries the post-translational modification N6-(pyridoxal phosphate)lysine.

Belongs to the class-III pyridoxal-phosphate-dependent aminotransferase family. HemL subfamily. Homodimer. Pyridoxal 5'-phosphate serves as cofactor.

It is found in the cytoplasm. It carries out the reaction (S)-4-amino-5-oxopentanoate = 5-aminolevulinate. Its pathway is porphyrin-containing compound metabolism; protoporphyrin-IX biosynthesis; 5-aminolevulinate from L-glutamyl-tRNA(Glu): step 2/2. In Geobacillus kaustophilus (strain HTA426), this protein is Glutamate-1-semialdehyde 2,1-aminomutase 1.